The sequence spans 945 residues: LPS-assembly protein LptD (945 aa).

A signal peptide spans 1–33 (MALKSPAFRKKFPLLVTGSLLALQPLATSFVVA). The disordered stretch occupies residues 56–98 (AQLPPRPVHDANSVSSSVATAADATGEEASGDKSKLVTEAKGR). The segment covering 65-79 (DANSVSSSVATAADA) has biased composition (low complexity). Positions 85 to 98 (SGDKSKLVTEAKGR) are enriched in basic and acidic residues.

It belongs to the LptD family. As to quaternary structure, component of the lipopolysaccharide transport and assembly complex. Interacts with LptE and LptA.

The protein resides in the cell outer membrane. Functionally, together with LptE, is involved in the assembly of lipopolysaccharide (LPS) at the surface of the outer membrane. The polypeptide is LPS-assembly protein LptD (Pseudomonas fluorescens (strain ATCC BAA-477 / NRRL B-23932 / Pf-5)).